The chain runs to 73 residues: Translation initiation factor IF-1 (73 aa).

The S1-like domain occupies 1–73 (MAKKDGAIEI…TRGRIVYRYK (73 aa)).

It belongs to the IF-1 family. As to quaternary structure, component of the 30S ribosomal translation pre-initiation complex which assembles on the 30S ribosome in the order IF-2 and IF-3, IF-1 and N-formylmethionyl-tRNA(fMet); mRNA recruitment can occur at any time during PIC assembly.

It localises to the cytoplasm. Functionally, one of the essential components for the initiation of protein synthesis. Stabilizes the binding of IF-2 and IF-3 on the 30S subunit to which N-formylmethionyl-tRNA(fMet) subsequently binds. Helps modulate mRNA selection, yielding the 30S pre-initiation complex (PIC). Upon addition of the 50S ribosomal subunit IF-1, IF-2 and IF-3 are released leaving the mature 70S translation initiation complex. The polypeptide is Translation initiation factor IF-1 (Thermobifida fusca (strain YX)).